The sequence spans 435 residues: Cyclin-J-like protein (435 aa).

The region spanning 14 to 191 is the Cyclin N-terminal domain; the sequence is DVHCTLREKE…LLEAFSWNLC (178 aa). A disordered region spans residues 120–142; the sequence is SSNSPASAPHPPPTPPQVAETTG.

It belongs to the cyclin family. Cyclin J subfamily.

The chain is Cyclin-J-like protein (CCNJL) from Homo sapiens (Human).